Here is a 571-residue protein sequence, read N- to C-terminus: Proline--tRNA ligase (571 aa).

This sequence belongs to the class-II aminoacyl-tRNA synthetase family. ProS type 1 subfamily. Homodimer.

The protein localises to the cytoplasm. The catalysed reaction is tRNA(Pro) + L-proline + ATP = L-prolyl-tRNA(Pro) + AMP + diphosphate. Functionally, catalyzes the attachment of proline to tRNA(Pro) in a two-step reaction: proline is first activated by ATP to form Pro-AMP and then transferred to the acceptor end of tRNA(Pro). As ProRS can inadvertently accommodate and process non-cognate amino acids such as alanine and cysteine, to avoid such errors it has two additional distinct editing activities against alanine. One activity is designated as 'pretransfer' editing and involves the tRNA(Pro)-independent hydrolysis of activated Ala-AMP. The other activity is designated 'posttransfer' editing and involves deacylation of mischarged Ala-tRNA(Pro). The misacylated Cys-tRNA(Pro) is not edited by ProRS. This chain is Proline--tRNA ligase, found in Shewanella sp. (strain W3-18-1).